Consider the following 331-residue polypeptide: Holliday junction branch migration complex subunit RuvB (331 aa).

The interval 1–171 (MTEPLDAALR…FGIIEHLEYY (171 aa)) is large ATPase domain (RuvB-L). ATP is bound by residues L9, R10, G51, K54, T55, T56, 118-120 (EDF), R161, Y171, and R208. T55 lines the Mg(2+) pocket. The segment at 172 to 242 (TPEEIGTNLL…RAQDALDKLG (71 aa)) is small ATPAse domain (RuvB-S). The segment at 245–331 (TAGLDERDKK…AESDLGLYTN (87 aa)) is head domain (RuvB-H). Positions 300 and 305 each coordinate DNA.

The protein belongs to the RuvB family. In terms of assembly, homohexamer. Forms an RuvA(8)-RuvB(12)-Holliday junction (HJ) complex. HJ DNA is sandwiched between 2 RuvA tetramers; dsDNA enters through RuvA and exits via RuvB. An RuvB hexamer assembles on each DNA strand where it exits the tetramer. Each RuvB hexamer is contacted by two RuvA subunits (via domain III) on 2 adjacent RuvB subunits; this complex drives branch migration. In the full resolvosome a probable DNA-RuvA(4)-RuvB(12)-RuvC(2) complex forms which resolves the HJ.

It localises to the cytoplasm. It catalyses the reaction ATP + H2O = ADP + phosphate + H(+). The RuvA-RuvB-RuvC complex processes Holliday junction (HJ) DNA during genetic recombination and DNA repair, while the RuvA-RuvB complex plays an important role in the rescue of blocked DNA replication forks via replication fork reversal (RFR). RuvA specifically binds to HJ cruciform DNA, conferring on it an open structure. The RuvB hexamer acts as an ATP-dependent pump, pulling dsDNA into and through the RuvAB complex. RuvB forms 2 homohexamers on either side of HJ DNA bound by 1 or 2 RuvA tetramers; 4 subunits per hexamer contact DNA at a time. Coordinated motions by a converter formed by DNA-disengaged RuvB subunits stimulates ATP hydrolysis and nucleotide exchange. Immobilization of the converter enables RuvB to convert the ATP-contained energy into a lever motion, pulling 2 nucleotides of DNA out of the RuvA tetramer per ATP hydrolyzed, thus driving DNA branch migration. The RuvB motors rotate together with the DNA substrate, which together with the progressing nucleotide cycle form the mechanistic basis for DNA recombination by continuous HJ branch migration. Branch migration allows RuvC to scan DNA until it finds its consensus sequence, where it cleaves and resolves cruciform DNA. This is Holliday junction branch migration complex subunit RuvB from Deinococcus geothermalis (strain DSM 11300 / CIP 105573 / AG-3a).